The primary structure comprises 181 residues: Protein GrpE (181 aa).

Positions 1-20 (MENTQENPASQSAEENGSET) are enriched in polar residues. Residues 1–39 (MENTQENPASQSAEENGSETQAAQDAAPAAEAADAALAE) form a disordered region. A compositionally biased stretch (low complexity) spans 21–39 (QAAQDAAPAAEAADAALAE).

It belongs to the GrpE family. As to quaternary structure, homodimer.

It localises to the cytoplasm. In terms of biological role, participates actively in the response to hyperosmotic and heat shock by preventing the aggregation of stress-denatured proteins, in association with DnaK and GrpE. It is the nucleotide exchange factor for DnaK and may function as a thermosensor. Unfolded proteins bind initially to DnaJ; upon interaction with the DnaJ-bound protein, DnaK hydrolyzes its bound ATP, resulting in the formation of a stable complex. GrpE releases ADP from DnaK; ATP binding to DnaK triggers the release of the substrate protein, thus completing the reaction cycle. Several rounds of ATP-dependent interactions between DnaJ, DnaK and GrpE are required for fully efficient folding. This Burkholderia multivorans (strain ATCC 17616 / 249) protein is Protein GrpE.